A 271-amino-acid chain; its full sequence is Phosphatidylinositol transfer protein alpha isoform (271 aa).

A 1,2-diacyl-sn-glycero-3-phospho-(1D-myo-inositol)-binding residues include T59, K61, E86, N90, T97, and K195. N6-acetyllysine is present on K216. Basic and acidic residues predominate over residues 251 to 264; sequence TKRQLDEMRQKDPV. Positions 251–271 are disordered; it reads TKRQLDEMRQKDPVKGMTADD.

Belongs to the PtdIns transfer protein family. PI transfer class I subfamily. Post-translationally, phosphorylated by PKC in a calcium and phosphatidylserine-dependent manner.

It is found in the cytoplasm. The protein resides in the nucleus. The enzyme catalyses a 1,2-diacyl-sn-glycero-3-phosphocholine(in) = a 1,2-diacyl-sn-glycero-3-phosphocholine(out). The catalysed reaction is a 1,2-diacyl-sn-glycero-3-phospho-(1D-myo-inositol)(in) = a 1,2-diacyl-sn-glycero-3-phospho-(1D-myo-inositol)(out). Catalyzes the transfer of phosphatidylinositol (PI) and phosphatidylcholine (PC) between membranes. Shows a preference for PI and PC containing shorter saturated or monosaturated acyl chains at the sn-1 and sn-2 positions. Preference order for PC is C16:1 &gt; C16:0 &gt; C18:1 &gt; C18:0 &gt; C20:4 and for PI is C16:1 &gt; C16:0 &gt; C18:1 &gt; C18:0 &gt; C20:4 &gt; C20:3. This chain is Phosphatidylinositol transfer protein alpha isoform (Pitpna), found in Mus musculus (Mouse).